Reading from the N-terminus, the 293-residue chain is Putative immediate early glycoprotein (293 aa).

The signal sequence occupies residues 1–21 (MKKLTMESLSVYIFVMGVCFT). 9 N-linked (GlcNAc...) asparagine; by host glycosylation sites follow: Asn23, Asn55, Asn83, Asn120, Asn150, Asn156, Asn168, Asn212, and Asn249. Residues 262–282 (LFFLAGGAFTMLLLLCCLSMI) form a helical membrane-spanning segment.

This sequence belongs to the herpesviridae immediate early glycoprotein family.

Its subcellular location is the membrane. In Human herpesvirus 6A (strain Uganda-1102) (HHV-6 variant A), this protein is Putative immediate early glycoprotein (U18).